A 398-amino-acid chain; its full sequence is MDAGAQPPDTEMAEAGGGQQPPAAAAAAGAGAGAGMMENIQATLSHGGRFIQYNIFGNVFEVTAKYKPPILPIGKGAYGIVCSALNSETGEQVAIKKIANAFDNKIDAKRTLREIKLLRHMDHENIVAIRDIIPPPQRNSFNDVYIAYELMDTDLHQIIRSNQALSEEHCQYFLYQILRGLKYIHSANVLHRDLKPSNLLLNANCDLKICDFGLARTTSETDFMTEYVVTRWYRAPELLLNSSEYTAAIDVWSVGCIFMELMDRKPLFPGRDHVHQLRLLMELIGTPNEADLDFVNENARRYIRQLPRHARQSFPEKFPHVHPLAIDLVEKMLTFDPRQRITVEGALAHPYLASLHDISDEPVCSSPFSFDFEQHALSEEQMKDLIYQEGLAFNPDYQ.

The tract at residues 1–26 is disordered; that stretch reads MDAGAQPPDTEMAEAGGGQQPPAAAA. The Protein kinase domain occupies 67 to 352; sequence KPPILPIGKG…VEGALAHPYL (286 aa). Residues 73 to 81 and Lys-96 each bind ATP; that span reads IGKGAYGIV. The active-site Proton acceptor is Asp-193. Thr-225 is subject to Phosphothreonine. The TXY motif lies at 225 to 227; the sequence is TEY. At Tyr-227 the chain carries Phosphotyrosine.

Belongs to the protein kinase superfamily. CMGC Ser/Thr protein kinase family. MAP kinase subfamily. In terms of assembly, may interact with RAC1. In terms of processing, dually phosphorylated on Thr-225 and Tyr-227, which activates the enzyme.

The enzyme catalyses L-seryl-[protein] + ATP = O-phospho-L-seryl-[protein] + ADP + H(+). It catalyses the reaction L-threonyl-[protein] + ATP = O-phospho-L-threonyl-[protein] + ADP + H(+). Its activity is regulated as follows. Activated by threonine and tyrosine phosphorylation. Activated in response to sphingolipid elicitor (SE). In terms of biological role, involved in sphingolipid elicitor (SE)-dependent defense signaling pathway. Acts downstream of heterotrimeric G protein alpha subunit and small GTPase RAC1. May regulate the expression of various genes involved in biotic and abiotic stress response. Involved in an abscisic acid signaling pathway that regulates the activities of antioxidant enzymes and the production of hydrogen peroxide. Acts downstream of CCAMK. This is Mitogen-activated protein kinase 1 (MPK1) from Oryza sativa subsp. japonica (Rice).